The sequence spans 159 residues: ATP synthase subunit b (159 aa).

The helical transmembrane segment at 8 to 28 (ILATIINFIILILILKHFFWD) threads the bilayer.

It belongs to the ATPase B chain family. In terms of assembly, F-type ATPases have 2 components, F(1) - the catalytic core - and F(0) - the membrane proton channel. F(1) has five subunits: alpha(3), beta(3), gamma(1), delta(1), epsilon(1). F(0) has three main subunits: a(1), b(2) and c(10-14). The alpha and beta chains form an alternating ring which encloses part of the gamma chain. F(1) is attached to F(0) by a central stalk formed by the gamma and epsilon chains, while a peripheral stalk is formed by the delta and b chains.

It is found in the cell membrane. F(1)F(0) ATP synthase produces ATP from ADP in the presence of a proton or sodium gradient. F-type ATPases consist of two structural domains, F(1) containing the extramembraneous catalytic core and F(0) containing the membrane proton channel, linked together by a central stalk and a peripheral stalk. During catalysis, ATP synthesis in the catalytic domain of F(1) is coupled via a rotary mechanism of the central stalk subunits to proton translocation. Functionally, component of the F(0) channel, it forms part of the peripheral stalk, linking F(1) to F(0). The protein is ATP synthase subunit b of Clostridium perfringens (strain ATCC 13124 / DSM 756 / JCM 1290 / NCIMB 6125 / NCTC 8237 / Type A).